The following is a 176-amino-acid chain: MAIGLEDKKAIVADVNETASSALSLVIADARGVTVGKMDALRKLARENNVRLRVVRNTLAKRAVQGTDFECVNEALVGPSLLGFSMEDPGAAARIFKDFAKEQDKFEVKALSVGGKLLPASQIDALAKLPTREQALGMLASVMIAPVTKLVRTFNEVPSKVTRAVAAVRDQKKDAA.

This sequence belongs to the universal ribosomal protein uL10 family. Part of the ribosomal stalk of the 50S ribosomal subunit. The N-terminus interacts with L11 and the large rRNA to form the base of the stalk. The C-terminus forms an elongated spine to which L12 dimers bind in a sequential fashion forming a multimeric L10(L12)X complex.

Its function is as follows. Forms part of the ribosomal stalk, playing a central role in the interaction of the ribosome with GTP-bound translation factors. The protein is Large ribosomal subunit protein uL10 of Teredinibacter turnerae (strain ATCC 39867 / T7901).